We begin with the raw amino-acid sequence, 121 residues long: Small ribosomal subunit protein uS13 (121 aa).

The tract at residues 99-121 (RGQRTRTNSRTRKGPRRKIMKKK) is disordered. Over residues 101-121 (QRTRTNSRTRKGPRRKIMKKK) the composition is skewed to basic residues.

It belongs to the universal ribosomal protein uS13 family. Part of the 30S ribosomal subunit. Forms a loose heterodimer with protein S19. Forms two bridges to the 50S subunit in the 70S ribosome.

Its function is as follows. Located at the top of the head of the 30S subunit, it contacts several helices of the 16S rRNA. In the 70S ribosome it contacts the 23S rRNA (bridge B1a) and protein L5 of the 50S subunit (bridge B1b), connecting the 2 subunits; these bridges are implicated in subunit movement. Contacts the tRNAs in the A and P-sites. In Thermodesulfovibrio yellowstonii (strain ATCC 51303 / DSM 11347 / YP87), this protein is Small ribosomal subunit protein uS13.